The chain runs to 206 residues: Cytidylate kinase (206 aa).

Residue 9–17 participates in ATP binding; the sequence is GPAAAGKGT.

The protein belongs to the cytidylate kinase family. Type 1 subfamily.

It is found in the cytoplasm. It catalyses the reaction CMP + ATP = CDP + ADP. It carries out the reaction dCMP + ATP = dCDP + ADP. The chain is Cytidylate kinase from Cereibacter sphaeroides (strain ATCC 17023 / DSM 158 / JCM 6121 / CCUG 31486 / LMG 2827 / NBRC 12203 / NCIMB 8253 / ATH 2.4.1.) (Rhodobacter sphaeroides).